A 179-amino-acid polypeptide reads, in one-letter code: Protein LDB18 (179 aa).

In terms of biological role, may be involved in protein-linked oligosaccharide phosphorylation since the deletion reduces the negative charge of the cell surface. The chain is Protein LDB18 (LDB18) from Saccharomyces cerevisiae (strain ATCC 204508 / S288c) (Baker's yeast).